Consider the following 131-residue polypeptide: Profilin (131 aa).

It belongs to the profilin family. In terms of assembly, occurs in many kinds of cells as a complex with monomeric actin in a 1:1 ratio.

The protein localises to the cytoplasm. The protein resides in the cytoskeleton. Binds to actin and affects the structure of the cytoskeleton. At high concentrations, profilin prevents the polymerization of actin, whereas it enhances it at low concentrations. By binding to PIP2, it inhibits the formation of IP3 and DG. This Capsicum annuum (Capsicum pepper) protein is Profilin.